Here is a 387-residue protein sequence, read N- to C-terminus: Putative serine/threonine-protein kinase (387 aa).

One can recognise a Protein kinase domain in the interval 15–344 (YQIEKLLNRG…ERVLEGQVEI (330 aa)). Residues 21-29 (LNRGGMDSY) and K55 each bind ATP. D164 (proton acceptor) is an active-site residue. 2 helical membrane-spanning segments follow: residues 232-252 (PPNAQYDIYSLGIILFEMLVG) and 363-383 (SIFTIVFIGLIIAAIVLLLIF).

This sequence belongs to the protein kinase superfamily. Ser/Thr protein kinase family.

It is found in the cell membrane. The catalysed reaction is L-seryl-[protein] + ATP = O-phospho-L-seryl-[protein] + ADP + H(+). It carries out the reaction L-threonyl-[protein] + ATP = O-phospho-L-threonyl-[protein] + ADP + H(+). The chain is Putative serine/threonine-protein kinase from Mycoplasma genitalium (strain ATCC 33530 / DSM 19775 / NCTC 10195 / G37) (Mycoplasmoides genitalium).